The sequence spans 145 residues: Large ribosomal subunit protein uL13 (145 aa).

Belongs to the universal ribosomal protein uL13 family. In terms of assembly, part of the 50S ribosomal subunit.

In terms of biological role, this protein is one of the early assembly proteins of the 50S ribosomal subunit, although it is not seen to bind rRNA by itself. It is important during the early stages of 50S assembly. This is Large ribosomal subunit protein uL13 from Staphylococcus aureus (strain Mu3 / ATCC 700698).